A 366-amino-acid chain; its full sequence is UPF0324 membrane protein RSc1111 (366 aa).

8 helical membrane-spanning segments follow: residues 21 to 43, 103 to 125, 137 to 159, 169 to 191, 198 to 220, 240 to 262, 283 to 305, and 343 to 365; these read LAGA…TAWA, LGAS…GAWV, AVLV…APAV, AIAS…YALA, VAPA…VIAA, VLAL…LVLE, WFAA…ATWH, and AGVL…RWLA.

This sequence belongs to the UPF0324 family.

It localises to the cell membrane. The polypeptide is UPF0324 membrane protein RSc1111 (Ralstonia nicotianae (strain ATCC BAA-1114 / GMI1000) (Ralstonia solanacearum)).